A 392-amino-acid polypeptide reads, in one-letter code: Extracellular metalloproteinase 4 (392 aa).

Positions 1–9 (VHSVVDYVS) are excised as a propeptide. N-linked (GlcNAc...) asparagine glycans are attached at residues Asn-27 and Asn-176. His-193 provides a ligand contact to Zn(2+). The active site involves Glu-194. His-197 is a Zn(2+) binding site. N-linked (GlcNAc...) asparagine glycans are attached at residues Asn-359 and Asn-385.

It belongs to the peptidase M36 family. Zn(2+) serves as cofactor.

The protein localises to the secreted. Its function is as follows. Secreted metalloproteinase probably acting as a virulence factor. In Trichophyton violaceum, this protein is Extracellular metalloproteinase 4 (MEP4).